The primary structure comprises 280 residues: MSSHTPAPALYGGSANRRVTVQDLAAAKERGERWPMLTAYDALTARIFDEAGIPVLLVGDSAAMVVFGYDSTIPVTLDDMIPLTAAVSRATKRALVVADLPFGSYQAGPEQALESAARLMKEGGAQAVKLEGGHRVIAQVEALVSAGIPVMGHIGLTPQSVNVLGGYRVQGRSEEAAEALLSDAKELERAGVFSVVLECVPARVGAEITRQLTVPTIGIGAGPDTDAQVLVWQDMAGLSPRVAKFVKSYANLAEQLRDAATSFAEEVVAGTFPDEQHSYA.

Asp60 and Asp99 together coordinate Mg(2+). 3-methyl-2-oxobutanoate contacts are provided by residues 60–61 (DS), Asp99, and Lys129. Residue Glu131 coordinates Mg(2+). Glu198 acts as the Proton acceptor in catalysis.

It belongs to the PanB family. As to quaternary structure, homodecamer; pentamer of dimers. Mg(2+) is required as a cofactor.

It is found in the cytoplasm. The catalysed reaction is 3-methyl-2-oxobutanoate + (6R)-5,10-methylene-5,6,7,8-tetrahydrofolate + H2O = 2-dehydropantoate + (6S)-5,6,7,8-tetrahydrofolate. Its pathway is cofactor biosynthesis; (R)-pantothenate biosynthesis; (R)-pantoate from 3-methyl-2-oxobutanoate: step 1/2. Catalyzes the reversible reaction in which hydroxymethyl group from 5,10-methylenetetrahydrofolate is transferred onto alpha-ketoisovalerate to form ketopantoate. The sequence is that of 3-methyl-2-oxobutanoate hydroxymethyltransferase from Thermobifida fusca (strain YX).